Here is a 186-residue protein sequence, read N- to C-terminus: Nuclear transcription factor Y subunit C-5 (186 aa).

The interval 166-186 (QMPGAWTEEDATGANGGNGGN) is disordered.

The protein belongs to the NFYC/HAP5 subunit family. In terms of assembly, heterotrimeric transcription factor composed of three components, NF-YA, NF-YB and NF-YC. NF-YB and NF-YC must interact and dimerize for NF-YA association and DNA binding. Expressed in inflorescences and flowers.

Its subcellular location is the nucleus. Stimulates the transcription of various genes by recognizing and binding to a CCAAT motif in promoters. This is Nuclear transcription factor Y subunit C-5 (NFYC5) from Arabidopsis thaliana (Mouse-ear cress).